The following is a 154-amino-acid chain: Ascorbate-specific PTS system EIIA component (154 aa).

In terms of domain architecture, PTS EIIA type-2 spans 6–150; it reads SLAENKSIRL…QEVLDLIDRT (145 aa). His-68 (tele-phosphohistidine intermediate) is an active-site residue. At His-68 the chain carries Phosphohistidine.

Its subcellular location is the cytoplasm. In terms of biological role, the phosphoenolpyruvate-dependent sugar phosphotransferase system (sugar PTS), a major carbohydrate active transport system, catalyzes the phosphorylation of incoming sugar substrates concomitantly with their translocation across the cell membrane. The enzyme II UlaABC PTS system is involved in ascorbate transport. In Shigella flexneri, this protein is Ascorbate-specific PTS system EIIA component (ulaC).